The sequence spans 426 residues: MTPLCLNCSVLPGDLYPGGARNPMACNGSAARGHFDPEDLNLTDEALRLKYLGPQQTELFMPICATYLLIFVVGAVGNGLTCLVILRHKAMRTPTNYYLFSLAVSDLLVLLVGLPLELYEMWHNYPFLLGVGGCYFRTLLFEMVCLASVLNVTALSVERYVAVVHPLQARSMVTRAHVRRVLGAVWGLAMLCSLPNTSLHGIRQLHVPCRGPVPDSAVCMLVRPRALYNMVVQTTALLFFCLPMAIMSVLYLLIGLRLRRERLLLMQEAKGRGSAAARSRYTCRLQQHDRGRRQVTKMLFVLVVVFGICWAPFHADRVMWSVVSQWTDGLHLAFQHVHVISGIFFYLGSAANPVLYSLMSSRFRETFQEALCLGACCHRLRPRHSSHSLSRMTTGSTLCDVGSLGSWVHPLAGNDGPEAQQETDPS.

At 1-65 the chain is on the extracellular side; it reads MTPLCLNCSV…QTELFMPICA (65 aa). N-linked (GlcNAc...) asparagine glycans are attached at residues Asn7, Asn27, and Asn41. The helical transmembrane segment at 66 to 86 threads the bilayer; sequence TYLLIFVVGAVGNGLTCLVIL. At 87 to 97 the chain is on the cytoplasmic side; that stretch reads RHKAMRTPTNY. Residues 98 to 118 form a helical membrane-spanning segment; the sequence is YLFSLAVSDLLVLLVGLPLEL. The Extracellular portion of the chain corresponds to 119–138; that stretch reads YEMWHNYPFLLGVGGCYFRT. A disulfide bond links Cys134 and Cys219. The chain crosses the membrane as a helical span at residues 139 to 161; that stretch reads LLFEMVCLASVLNVTALSVERYV. Residues 162-181 are Cytoplasmic-facing; the sequence is AVVHPLQARSMVTRAHVRRV. Residues 182-202 traverse the membrane as a helical segment; that stretch reads LGAVWGLAMLCSLPNTSLHGI. Over 203–235 the chain is Extracellular; the sequence is RQLHVPCRGPVPDSAVCMLVRPRALYNMVVQTT. A helical membrane pass occupies residues 236 to 256; the sequence is ALLFFCLPMAIMSVLYLLIGL. Over 257–294 the chain is Cytoplasmic; sequence RLRRERLLLMQEAKGRGSAAARSRYTCRLQQHDRGRRQ. A helical membrane pass occupies residues 295–315; sequence VTKMLFVLVVVFGICWAPFHA. Residues 316 to 338 lie on the Extracellular side of the membrane; sequence DRVMWSVVSQWTDGLHLAFQHVH. A helical transmembrane segment spans residues 339-359; that stretch reads VISGIFFYLGSAANPVLYSLM. Residues 360-426 lie on the Cytoplasmic side of the membrane; sequence SSRFRETFQE…PEAQQETDPS (67 aa).

The protein belongs to the G-protein coupled receptor 1 family. As to expression, expressed in greatest abundance in peripheral organs, particularly in elements of the gastrointestinal and urogenital systems with highest levels in testes. In central nervous system structures express levels are much lower than those seen in peripheral organs. Within the CNS, has been detected in highest abundance in the cerebellum, dorsal root ganglia, hippocampus, and spinal cord.

The protein localises to the cell membrane. Its function is as follows. Receptor for the neuromedin-U and neuromedin-S neuropeptides. The polypeptide is Neuromedin-U receptor 1 (NMUR1) (Homo sapiens (Human)).